A 120-amino-acid polypeptide reads, in one-letter code: UPF0382 membrane protein SSP2132 (120 aa).

4 consecutive transmembrane segments (helical) span residues 3–23 (VFIILGALNAMMAVGTGAFGA), 46–66 (MYHGLGLLAIGIISGTTSINV), 69–89 (VGWLLFFGIVFFSGSLYILAL), and 94–114 (IIGAITPIGGVLFIVGWLMLV).

It belongs to the UPF0382 family.

It localises to the cell membrane. The protein is UPF0382 membrane protein SSP2132 of Staphylococcus saprophyticus subsp. saprophyticus (strain ATCC 15305 / DSM 20229 / NCIMB 8711 / NCTC 7292 / S-41).